Here is a 178-residue protein sequence, read N- to C-terminus: MACEQHEGCYELEEREEIEDIKDSDTKWVSITQAAKLHNVTRQAIYVAIKQKKLKASKETRWEIDIKDLEEYKRNRYSRKKSLYQGELVFDNGKGCYSINQVAQILGIPVQKVYYATRTGTIRGERKGAAWVIHVSEIERYKNEYLSKQAAKKLKGAEPKEHQAPNFEPPTEIFPESN.

Residues Lys152–Asn178 are disordered.

The protein belongs to the EUO family.

This is an uncharacterized protein from Chlamydia pneumoniae (Chlamydophila pneumoniae).